A 221-amino-acid chain; its full sequence is Glutathione S-transferase alpha-3 (221 aa).

In terms of domain architecture, GST N-terminal spans 3 to 83 (GKPVLHYFDG…YIATKYNLYG (81 aa)). The residue at position 4 (Lys4) is an N6-succinyllysine. Residues Tyr9, Arg45, 54 to 55 (QV), and 67 to 68 (QT) contribute to the glutathione site. Positions 85–207 (DMKERALIDM…LQPGSQRKPL (123 aa)) constitute a GST C-terminal domain.

This sequence belongs to the GST superfamily. Alpha family. Heterodimer of YC1 and YC2.

The protein localises to the cytoplasm. It catalyses the reaction RX + glutathione = an S-substituted glutathione + a halide anion + H(+). The catalysed reaction is androst-5-ene-3,17-dione = androst-4-ene-3,17-dione. The enzyme catalyses pregn-5-ene-3,20-dione = progesterone. In terms of biological role, conjugation of reduced glutathione to a wide number of exogenous and endogenous hydrophobic electrophiles. Catalyzes isomerization reactions that contribute to the biosynthesis of steroid hormones. Efficiently catalyze obligatory double-bond isomerizations of delta(5)-androstene-3,17-dione and delta(5)-pregnene-3,20-dione, precursors to testosterone and progesterone, respectively. Has substantial activity toward aflatoxin B1-8,9-epoxide. The polypeptide is Glutathione S-transferase alpha-3 (Rattus norvegicus (Rat)).